A 281-amino-acid chain; its full sequence is CCAAT/enhancer-binding protein epsilon (281 aa).

Positions 1–30 (MSHGTYYECEPRGGQQPLEFSGGRAGPGEL) are disordered. A Glycyl lysine isopeptide (Lys-Gly) (interchain with G-Cter in SUMO2) cross-link involves residue lysine 121. Serine 181 carries the phosphoserine modification. In terms of domain architecture, bZIP spans 204–267 (SLEYRLRRER…DTLRNLFRQI (64 aa)). The segment at 208–245 (RLRRERNNIAVRKSRDKAKRRIMETQQKVLEYMAENER) is basic motif. Residues 246 to 267 (LRSRVDQLTQELDTLRNLFRQI) are leucine-zipper.

Belongs to the bZIP family. C/EBP subfamily. In terms of assembly, binds DNA as a homodimer and as a heterodimer. Can form stable heterodimers with CEBPA, CEBPB and CEBPD. Interacts with GATA1 and SPI1. Interacts with SMARCD2.

It localises to the nucleus. Its function is as follows. Transcriptional activator. C/EBP are DNA-binding proteins that recognize two different motifs: the CCAAT homology common to many promoters and the enhanced core homology common to many enhancers. Required for the promyelocyte-myelocyte transition in myeloid differentiation. In Rattus norvegicus (Rat), this protein is CCAAT/enhancer-binding protein epsilon (Cebpe).